The sequence spans 425 residues: Polyribonucleotide 5'-hydroxyl-kinase Clp1 (425 aa).

ATP-binding positions include glutamate 22, lysine 62, and 124–129 (DVGKST).

The protein belongs to the Clp1 family. Clp1 subfamily. Component of the tRNA splicing endonuclease complex, composed of CLP1, TSEN2, TSEN15, TSEN34 and TSEN54. Component of pre-mRNA cleavage complex II (CF-II). Also associates with numerous components of the pre-mRNA cleavage complex I (CF-I/CFIm), including NUDT21, CPSF2, CPSF3, CPSF6 and CPSF7. Interacts with CSTF2 and SYMPK. It depends on Mg(2+) as a cofactor. Requires Mn(2+) as cofactor. Ni(2+) serves as cofactor.

The protein localises to the nucleus. It carries out the reaction a 5'-end dephospho-2'-deoxyribonucleoside-DNA + ATP = a 5'-end 5'-phospho-2'-deoxyribonucleoside-DNA + ADP + H(+). It catalyses the reaction a 5'-end dephospho-ribonucleoside-RNA + ATP = a 5'-end 5'-phospho-ribonucleoside-RNA + ADP + H(+). Its function is as follows. Polynucleotide kinase that can phosphorylate the 5'-hydroxyl groups of double-stranded RNA (dsRNA), single-stranded RNA (ssRNA), double-stranded DNA (dsDNA) and double-stranded DNA:RNA hybrids. dsRNA is phosphorylated more efficiently than dsDNA, and the RNA component of a DNA:RNA hybrid is phosphorylated more efficiently than the DNA component. Plays a key role in both tRNA splicing and mRNA 3'-end formation. Component of the tRNA splicing endonuclease complex: phosphorylates the 5'-terminus of the tRNA 3'-exon during tRNA splicing; this phosphorylation event is a prerequisite for the subsequent ligation of the two exon halves and the production of a mature tRNA. Its role in tRNA splicing and maturation is required for cerebellar development. Component of the pre-mRNA cleavage complex II (CF-II), which seems to be required for mRNA 3'-end formation. Also phosphorylates the 5'-terminus of exogenously introduced short interfering RNAs (siRNAs), which is a necessary prerequisite for their incorporation into the RNA-induced silencing complex (RISC). However, endogenous siRNAs and microRNAs (miRNAs) that are produced by the cleavage of dsRNA precursors by DICER1 already contain a 5'-phosphate group, so this protein may be dispensible for normal RNA-mediated gene silencing. The polypeptide is Polyribonucleotide 5'-hydroxyl-kinase Clp1 (Homo sapiens (Human)).